A 248-amino-acid chain; its full sequence is UPF0246 protein FN1762 (248 aa).

The protein belongs to the UPF0246 family.

The protein is UPF0246 protein FN1762 of Fusobacterium nucleatum subsp. nucleatum (strain ATCC 25586 / DSM 15643 / BCRC 10681 / CIP 101130 / JCM 8532 / KCTC 2640 / LMG 13131 / VPI 4355).